The following is a 289-amino-acid chain: Acetyl-coenzyme A carboxylase carboxyl transferase subunit beta 2 (289 aa).

Positions Val25–Glu289 constitute a CoA carboxyltransferase N-terminal domain. Residues Cys29, Cys32, Cys48, and Cys51 each coordinate Zn(2+). The C4-type zinc finger occupies Cys29 to Cys51.

It belongs to the AccD/PCCB family. As to quaternary structure, acetyl-CoA carboxylase is a heterohexamer composed of biotin carboxyl carrier protein (AccB), biotin carboxylase (AccC) and two subunits each of ACCase subunit alpha (AccA) and ACCase subunit beta (AccD). Zn(2+) is required as a cofactor.

Its subcellular location is the cytoplasm. The catalysed reaction is N(6)-carboxybiotinyl-L-lysyl-[protein] + acetyl-CoA = N(6)-biotinyl-L-lysyl-[protein] + malonyl-CoA. The protein operates within lipid metabolism; malonyl-CoA biosynthesis; malonyl-CoA from acetyl-CoA: step 1/1. Functionally, component of the acetyl coenzyme A carboxylase (ACC) complex. Biotin carboxylase (BC) catalyzes the carboxylation of biotin on its carrier protein (BCCP) and then the CO(2) group is transferred by the transcarboxylase to acetyl-CoA to form malonyl-CoA. This Vibrio campbellii (strain ATCC BAA-1116) protein is Acetyl-coenzyme A carboxylase carboxyl transferase subunit beta 2.